Consider the following 271-residue polypeptide: 3-methyl-2-oxobutanoate hydroxymethyltransferase (271 aa).

Positions 51 and 90 each coordinate Mg(2+). 3-methyl-2-oxobutanoate-binding positions include D51–S52, D90, and K118. E120 contributes to the Mg(2+) binding site. E186 acts as the Proton acceptor in catalysis.

This sequence belongs to the PanB family. In terms of assembly, homodecamer; pentamer of dimers. Mg(2+) serves as cofactor.

Its subcellular location is the cytoplasm. It catalyses the reaction 3-methyl-2-oxobutanoate + (6R)-5,10-methylene-5,6,7,8-tetrahydrofolate + H2O = 2-dehydropantoate + (6S)-5,6,7,8-tetrahydrofolate. It functions in the pathway cofactor biosynthesis; (R)-pantothenate biosynthesis; (R)-pantoate from 3-methyl-2-oxobutanoate: step 1/2. Functionally, catalyzes the reversible reaction in which hydroxymethyl group from 5,10-methylenetetrahydrofolate is transferred onto alpha-ketoisovalerate to form ketopantoate. The chain is 3-methyl-2-oxobutanoate hydroxymethyltransferase from Stenotrophomonas maltophilia (strain R551-3).